The primary structure comprises 372 residues: Geranylgeranyl pyrophosphate synthase 4 (372 aa).

The first 22 residues, 1–22 (MEAQNIFLYLLIVFLSLHFVFT), serve as a signal peptide directing secretion. Isopentenyl diphosphate-binding residues include Lys-121, Arg-124, and His-153. Asp-160 and Asp-166 together coordinate Mg(2+). Arg-171 is a dimethylallyl diphosphate binding site. Arg-172 is an isopentenyl diphosphate binding site. Dimethylallyl diphosphate-binding residues include Lys-257, Thr-258, Gln-295, Lys-312, and Lys-322.

Belongs to the FPP/GGPP synthase family. Monomer. Mg(2+) is required as a cofactor. Faintly expressed in flowers. Expressed in roots and siliques.

The protein resides in the endoplasmic reticulum. It catalyses the reaction isopentenyl diphosphate + dimethylallyl diphosphate = (2E)-geranyl diphosphate + diphosphate. The catalysed reaction is isopentenyl diphosphate + (2E)-geranyl diphosphate = (2E,6E)-farnesyl diphosphate + diphosphate. The enzyme catalyses isopentenyl diphosphate + (2E,6E)-farnesyl diphosphate = (2E,6E,10E)-geranylgeranyl diphosphate + diphosphate. It participates in isoprenoid biosynthesis; farnesyl diphosphate biosynthesis; farnesyl diphosphate from geranyl diphosphate and isopentenyl diphosphate: step 1/1. Its pathway is isoprenoid biosynthesis; geranyl diphosphate biosynthesis; geranyl diphosphate from dimethylallyl diphosphate and isopentenyl diphosphate: step 1/1. It functions in the pathway isoprenoid biosynthesis; geranylgeranyl diphosphate biosynthesis; geranylgeranyl diphosphate from farnesyl diphosphate and isopentenyl diphosphate: step 1/1. Its function is as follows. Catalyzes the trans-addition of the three molecules of isopentenyl diphosphate (IPP) onto dimethylallyl diphosphate (DMAPP) to form geranylgeranyl diphosphate. This chain is Geranylgeranyl pyrophosphate synthase 4, found in Arabidopsis thaliana (Mouse-ear cress).